We begin with the raw amino-acid sequence, 454 residues long: Bifunctional protein GlmU (454 aa).

Positions 1–228 (MTLPLHVVIL…PQDVEGANDP (228 aa)) are pyrophosphorylase. UDP-N-acetyl-alpha-D-glucosamine is bound by residues 10–13 (LAAG), Lys-24, Gln-76, 81–82 (GT), 103–105 (YGD), Gly-138, Glu-153, Asn-168, and Asn-226. A Mg(2+)-binding site is contributed by Asp-105. Position 226 (Asn-226) interacts with Mg(2+). The tract at residues 229–249 (WQLAQLERAWQLRAARALCLQ) is linker. Residues 250-454 (GVRMADPARV…IEGWERPKKK (205 aa)) form an N-acetyltransferase region. 2 residues coordinate UDP-N-acetyl-alpha-D-glucosamine: Arg-332 and Lys-350. The Proton acceptor role is filled by His-362. UDP-N-acetyl-alpha-D-glucosamine-binding residues include Tyr-365 and Asn-376. Residues Ala-379, 385 to 386 (NY), Ser-404, Ala-422, and Arg-439 each bind acetyl-CoA.

This sequence in the N-terminal section; belongs to the N-acetylglucosamine-1-phosphate uridyltransferase family. In the C-terminal section; belongs to the transferase hexapeptide repeat family. In terms of assembly, homotrimer. It depends on Mg(2+) as a cofactor.

The protein resides in the cytoplasm. It catalyses the reaction alpha-D-glucosamine 1-phosphate + acetyl-CoA = N-acetyl-alpha-D-glucosamine 1-phosphate + CoA + H(+). The enzyme catalyses N-acetyl-alpha-D-glucosamine 1-phosphate + UTP + H(+) = UDP-N-acetyl-alpha-D-glucosamine + diphosphate. Its pathway is nucleotide-sugar biosynthesis; UDP-N-acetyl-alpha-D-glucosamine biosynthesis; N-acetyl-alpha-D-glucosamine 1-phosphate from alpha-D-glucosamine 6-phosphate (route II): step 2/2. It functions in the pathway nucleotide-sugar biosynthesis; UDP-N-acetyl-alpha-D-glucosamine biosynthesis; UDP-N-acetyl-alpha-D-glucosamine from N-acetyl-alpha-D-glucosamine 1-phosphate: step 1/1. It participates in bacterial outer membrane biogenesis; LPS lipid A biosynthesis. Functionally, catalyzes the last two sequential reactions in the de novo biosynthetic pathway for UDP-N-acetylglucosamine (UDP-GlcNAc). The C-terminal domain catalyzes the transfer of acetyl group from acetyl coenzyme A to glucosamine-1-phosphate (GlcN-1-P) to produce N-acetylglucosamine-1-phosphate (GlcNAc-1-P), which is converted into UDP-GlcNAc by the transfer of uridine 5-monophosphate (from uridine 5-triphosphate), a reaction catalyzed by the N-terminal domain. The protein is Bifunctional protein GlmU of Xanthomonas campestris pv. campestris (strain B100).